We begin with the raw amino-acid sequence, 284 residues long: Nitrogenase iron protein 1 (284 aa).

Position 17-24 (17-24 (GKGGIGKS)) interacts with ATP. Cysteine 105 contributes to the [4Fe-4S] cluster binding site. The residue at position 108 (arginine 108) is an ADP-ribosylarginine; by dinitrogenase reductase ADP-ribosyltransferase. Position 140 (cysteine 140) interacts with [4Fe-4S] cluster.

Belongs to the NifH/BchL/ChlL family. Homodimer. [4Fe-4S] cluster serves as cofactor. The reversible ADP-ribosylation of Arg-108 inactivates the nitrogenase reductase and regulates nitrogenase activity.

The catalysed reaction is N2 + 8 reduced [2Fe-2S]-[ferredoxin] + 16 ATP + 16 H2O = H2 + 8 oxidized [2Fe-2S]-[ferredoxin] + 2 NH4(+) + 16 ADP + 16 phosphate + 6 H(+). The key enzymatic reactions in nitrogen fixation are catalyzed by the nitrogenase complex, which has 2 components: the iron protein and the molybdenum-iron protein. In Methanothermococcus thermolithotrophicus (Methanococcus thermolithotrophicus), this protein is Nitrogenase iron protein 1 (nifH1).